The chain runs to 181 residues: ADP-ribosylation factor-like protein 1 (181 aa).

A lipid anchor (N-myristoyl glycine) is attached at G2. GTP contacts are provided by residues 24 to 31, 45 to 48, G70, 126 to 129, and 160 to 161; these read GLDGAGKT, TIPT, NKQD, and AT. Mg(2+)-binding residues include T31 and T48.

It belongs to the small GTPase superfamily. Arf family. The GTP-bound form interacts with GOLGA1. The GTP-bound form interacts with GOLGA4 and RGPD8. The GTP-bound form directly interacts with ARFIP2. Binds to SCOC, preferentially in its GTP-bound form. May interact with UNC119. Interacts with ARFIP1; this interaction directs ARFIP1 to the trans-Golgi membranes. Interacts with ARFGEF1 (via N-terminus). In terms of tissue distribution, detected in heart, liver, lung and liver (at protein level). Detected in fetal heart, lung, liver and kidney. Detected in adult heart, placenta, lung, liver, skeletal muscle, kidney and pancreas.

Its subcellular location is the golgi apparatus membrane. It localises to the golgi apparatus. It is found in the trans-Golgi network membrane. The protein localises to the membrane. In terms of biological role, GTP-binding protein that recruits several effectors, such as golgins, arfaptins and Arf-GEFs to the trans-Golgi network, and modulates their functions at the Golgi complex. Plays thereby a role in a wide range of fundamental cellular processes, including cell polarity, innate immunity, or protein secretion mediated by arfaptins, which were shown to play a role in maintaining insulin secretion from pancreatic beta cells. The protein is ADP-ribosylation factor-like protein 1 (ARL1) of Homo sapiens (Human).